Here is a 344-residue protein sequence, read N- to C-terminus: DNA-directed RNA polymerase subunit alpha (344 aa).

Positions 1 to 246 (MPVEKFLKDF…EFLFPLIDFE (246 aa)) are alpha N-terminal domain (alpha-NTD). Residues 259-344 (ESSNLLDMSI…VLSKNVKISE (86 aa)) are alpha C-terminal domain (alpha-CTD).

Belongs to the RNA polymerase alpha chain family. As to quaternary structure, homodimer. The RNAP catalytic core consists of 2 alpha, 1 beta, 1 beta' and 1 omega subunit. When a sigma factor is associated with the core the holoenzyme is formed, which can initiate transcription.

It catalyses the reaction RNA(n) + a ribonucleoside 5'-triphosphate = RNA(n+1) + diphosphate. In terms of biological role, DNA-dependent RNA polymerase catalyzes the transcription of DNA into RNA using the four ribonucleoside triphosphates as substrates. The chain is DNA-directed RNA polymerase subunit alpha from Borrelia garinii subsp. bavariensis (strain ATCC BAA-2496 / DSM 23469 / PBi) (Borreliella bavariensis).